The chain runs to 216 residues: 3-keto-L-gulonate-6-phosphate decarboxylase UlaD (216 aa).

Asp-11 contributes to the substrate binding site. 2 residues coordinate Mg(2+): Glu-33 and Asp-62. Arg-192 contacts substrate.

It belongs to the HPS/KGPDC family. KGPDC subfamily. Homodimer. It depends on Mg(2+) as a cofactor.

It catalyses the reaction 3-dehydro-L-gulonate 6-phosphate + H(+) = L-xylulose 5-phosphate + CO2. It functions in the pathway cofactor degradation; L-ascorbate degradation; D-xylulose 5-phosphate from L-ascorbate: step 2/4. Functionally, catalyzes the decarboxylation of 3-keto-L-gulonate-6-P into L-xylulose-5-P. Is involved in the anaerobic L-ascorbate utilization. The polypeptide is 3-keto-L-gulonate-6-phosphate decarboxylase UlaD (Escherichia fergusonii (strain ATCC 35469 / DSM 13698 / CCUG 18766 / IAM 14443 / JCM 21226 / LMG 7866 / NBRC 102419 / NCTC 12128 / CDC 0568-73)).